The sequence spans 209 residues: MSKVTVIDHPLIQHKLTLIRDKNTGSKDFRALVREISMLMGYEVTRDLSLEEIEIETPVCTTKAKTLTGRKLGIVPILRAGLGMVDGILELIPAAKVGHVGLYRDPETLEPVEYYVKLPTDVHERELIVLDPMLATGGSANAAIQFIKDRGATNIKLVCLVSCPQGIAAVQEAHPDVDIYVAAIDETLDDHAYIVPGLGDAGDRLFGTK.

Residues R79, R104, and 131–139 (DPMLATGGS) each bind 5-phospho-alpha-D-ribose 1-diphosphate. Residues I194 and 199-201 (GDA) contribute to the uracil site. D200 is a binding site for 5-phospho-alpha-D-ribose 1-diphosphate.

It belongs to the UPRTase family. Mg(2+) serves as cofactor.

It catalyses the reaction UMP + diphosphate = 5-phospho-alpha-D-ribose 1-diphosphate + uracil. It participates in pyrimidine metabolism; UMP biosynthesis via salvage pathway; UMP from uracil: step 1/1. Allosterically activated by GTP. Functionally, catalyzes the conversion of uracil and 5-phospho-alpha-D-ribose 1-diphosphate (PRPP) to UMP and diphosphate. This is Uracil phosphoribosyltransferase from Alkaliphilus oremlandii (strain OhILAs) (Clostridium oremlandii (strain OhILAs)).